Consider the following 862-residue polypeptide: Leucine--tRNA ligase (862 aa).

Residues 51-61 (PYPSGSLHMGH) carry the 'HIGH' region motif. The 'KMSKS' region signature appears at 624–628 (KMSKS). Lysine 627 lines the ATP pocket.

It belongs to the class-I aminoacyl-tRNA synthetase family.

It localises to the cytoplasm. It carries out the reaction tRNA(Leu) + L-leucine + ATP = L-leucyl-tRNA(Leu) + AMP + diphosphate. In Prochlorococcus marinus (strain NATL1A), this protein is Leucine--tRNA ligase.